Reading from the N-terminus, the 61-residue chain is Large ribosomal subunit protein uL30 (61 aa).

Belongs to the universal ribosomal protein uL30 family. Part of the 50S ribosomal subunit.

This chain is Large ribosomal subunit protein uL30, found in Shewanella piezotolerans (strain WP3 / JCM 13877).